The sequence spans 452 residues: Tubulin alpha-1D chain (452 aa).

The MREC motif signature appears at 1-4 (MREC). GTP is bound at residue Gln-11. An N6-acetyllysine modification is found at Lys-40. Residues Glu-71, Ser-140, Gly-144, Thr-145, Thr-179, Asn-206, and Asn-228 each coordinate GTP. Position 71 (Glu-71) interacts with Mg(2+). Glu-254 is an active-site residue. Position 282 is a 3'-nitrotyrosine (Tyr-282). Residues 432-452 (YEEVGMDSVEGEGEEEEGDEY) are disordered. Phosphoserine is present on Ser-439. Glu-446 is modified (5-glutamyl polyglutamate). Tyr-452 is modified (3'-nitrotyrosine).

It belongs to the tubulin family. Dimer of alpha and beta chains. A typical microtubule is a hollow water-filled tube with an outer diameter of 25 nm and an inner diameter of 15 nM. Alpha-beta heterodimers associate head-to-tail to form protofilaments running lengthwise along the microtubule wall with the beta-tubulin subunit facing the microtubule plus end conferring a structural polarity. Microtubules usually have 13 protofilaments but different protofilament numbers can be found in some organisms and specialized cells. It depends on Mg(2+) as a cofactor. Some glutamate residues at the C-terminus are polyglycylated, resulting in polyglycine chains on the gamma-carboxyl group. Glycylation is mainly limited to tubulin incorporated into axonemes (cilia and flagella) whereas glutamylation is prevalent in neuronal cells, centrioles, axonemes, and the mitotic spindle. Both modifications can coexist on the same protein on adjacent residues, and lowering polyglycylation levels increases polyglutamylation, and reciprocally. Cilia and flagella glycylation is required for their stability and maintenance. Flagella glycylation controls sperm motility. In terms of processing, some glutamate residues at the C-terminus are polyglutamylated, resulting in polyglutamate chains on the gamma-carboxyl group. Polyglutamylation plays a key role in microtubule severing by spastin (SPAST). SPAST preferentially recognizes and acts on microtubules decorated with short polyglutamate tails: severing activity by SPAST increases as the number of glutamates per tubulin rises from one to eight, but decreases beyond this glutamylation threshold. Glutamylation is also involved in cilia motility. Post-translationally, acetylation of alpha chains at Lys-40 is located inside the microtubule lumen. This modification has been correlated with increased microtubule stability, intracellular transport and ciliary assembly. Methylation of alpha chains at Lys-40 is found in mitotic microtubules and is required for normal mitosis and cytokinesis contributing to genomic stability. In terms of processing, nitration of Tyr-452 is irreversible and interferes with normal dynein intracellular distribution. Post-translationally, undergoes a tyrosination/detyrosination cycle, the cyclic removal and re-addition of a C-terminal tyrosine residue by the enzymes tubulin tyrosine carboxypeptidase (MATCAP, VASH1 or VASH2) and tubulin tyrosine ligase (TTL), respectively. Tyrosination promotes microtubule interaction with CAP-Gly domain-containing proteins such as CLIP1, CLIP2 and DCTN1. Tyrosination regulates the initiation of dynein-dynactin motility via interaction with DCTN1, which brings the dynein-dynactin complex into contact with microtubules. In neurons, tyrosinated tubulins mediate the initiation of retrograde vesicle transport. In terms of processing, detyrosination is involved in metaphase plate congression by guiding chromosomes during mitosis: detyrosination promotes interaction with CENPE, promoting pole-proximal transport of chromosomes toward the equator. Detyrosination increases microtubules-dependent mechanotransduction in dystrophic cardiac and skeletal muscle. In cardiomyocytes, detyrosinated microtubules are required to resist to contractile compression during contraction: detyrosination promotes association with desmin (DES) at force-generating sarcomeres, leading to buckled microtubules and mechanical resistance to contraction.

The protein localises to the cytoplasm. It localises to the cytoskeleton. The catalysed reaction is GTP + H2O = GDP + phosphate + H(+). In terms of biological role, tubulin is the major constituent of microtubules, a cylinder consisting of laterally associated linear protofilaments composed of alpha- and beta-tubulin heterodimers. Microtubules grow by the addition of GTP-tubulin dimers to the microtubule end, where a stabilizing cap forms. Below the cap, tubulin dimers are in GDP-bound state, owing to GTPase activity of alpha-tubulin. The protein is Tubulin alpha-1D chain (TUBA1D) of Bos taurus (Bovine).